Consider the following 634-residue polypeptide: MTNSNTRTESHFDYVKIKLASPERIREWGQRTLPNGQVVGEVTKPETINYRTLKPEMDGLFCEKIFGPSKDWECHCGKYKRVRHRGIVCERCGVEVTESRVRRHRMGFIKLAAPVSHVWYLKGIPSYVAILLDMPLRDVEQIVYFNCYVVLDPGDHKTLKYKQLLTEDEWLEIEDEIYAEDSEIETEPEVGIGAEALKALLEDLELTEIAEQLREDISGSKGQKRAKLIKRLRVIDNFIATDARPEWMVLDAIPVIPPDLRPMVQLDGGRFATSDLNDLYRRVINRNNRLARLQEILAPEIIVRNEKRMLQEAVDALIDNGRRGRTVVGANNRPLKSLSDIIEGKQGRFRQNLLGKRVDYSGRSVIVVGPKLKMHQCGLPKEMAIELFQPFVIHRLIRQNIVNNIKAAKKLIQRADDEVMQVLQEVIDGHPILLNRAPTLHRLGIQAFEPKLVDGRAIQLHPLVCPAFNADFDGDQMAVHVPLALEAQTEARMLMLASNNILSPATGQPIITPSQDMVLGAYYLTATRQERSKPEFGDRSRTYANLEDVCHAFEEKRITLHDWVWVRFNGAVDDDDEAKEPIKSETLSDGTRVEQWQYRRDRLDEDGALISRYVLTTTGRVVMNRTIIDAVVTR.

4 residues coordinate Zn(2+): C74, C76, C89, and C92. Residues D471, D473, and D475 each contribute to the Mg(2+) site.

This sequence belongs to the RNA polymerase beta' chain family. RpoC1 subfamily. In terms of assembly, in cyanobacteria the RNAP catalytic core is composed of 2 alpha, 1 beta, 1 beta', 1 gamma and 1 omega subunit. When a sigma factor is associated with the core the holoenzyme is formed, which can initiate transcription. The cofactor is Mg(2+). It depends on Zn(2+) as a cofactor.

It carries out the reaction RNA(n) + a ribonucleoside 5'-triphosphate = RNA(n+1) + diphosphate. In terms of biological role, DNA-dependent RNA polymerase catalyzes the transcription of DNA into RNA using the four ribonucleoside triphosphates as substrates. This is DNA-directed RNA polymerase subunit gamma from Synechococcus sp. (strain RCC307).